Consider the following 865-residue polypeptide: Ribosome biogenesis protein BOP1 homolog (865 aa).

Disordered regions lie at residues 1–195 and 207–240; these read MVAN…LKLG and KTRG…EEDI. Composition is skewed to acidic residues over residues 30-44, 57-79, and 87-159; these read LDES…ESDY, NEGE…DDVL, and DGEE…EEEA. A compositionally biased stretch (basic and acidic residues) spans 160–180; it reads KENGKEKPAKAKAERKQREEQ. 7 WD repeats span residues 526 to 565, 567 to 607, 651 to 693, 696 to 734, 737 to 776, 780 to 819, and 835 to 865; these read GHTS…CIRT, PTGD…YMLV, THFR…SQVP, KSKG…MMKK, PGCK…KPYQ, IHNA…DLLQ, and VNDF…RLYT.

Belongs to the WD repeat BOP1/ERB1 family.

The protein localises to the nucleus. The protein resides in the nucleolus. Its subcellular location is the nucleoplasm. Functionally, required for maturation of ribosomal RNAs and formation of the large ribosomal subunit. The polypeptide is Ribosome biogenesis protein BOP1 homolog (Anopheles gambiae (African malaria mosquito)).